Here is a 93-residue protein sequence, read N- to C-terminus: Large ribosomal subunit protein uL23cz/uL23cy (93 aa).

This sequence belongs to the universal ribosomal protein uL23 family. As to quaternary structure, part of the 50S ribosomal subunit.

The protein localises to the plastid. It is found in the chloroplast. Functionally, binds to 23S rRNA. The polypeptide is Large ribosomal subunit protein uL23cz/uL23cy (rpl23-A) (Gossypium barbadense (Sea Island cotton)).